Here is a 250-residue protein sequence, read N- to C-terminus: MTDILIDDTATEAVRTLIRAFPLVPVSQPPEQGSYLLAEHDTVSLRLVGEKSNVIVDFTSGAAQYRRTKGGGELIAKAVNHTAHPTVWDATAGLGRDSFVLASLGLTVTAFEQHPAVACLLSDGIRRALLNPETQDTAARINLHFGNAAEQMPALVKTQGKPDIVYLDPMYPERRKSAAVKKEMAYFHRLVGEAQDEVILLHTARQTAKKRVVVKRPRLGEHLAGQAPAYQYTGKSTRFDVYLPYGADKG.

S-adenosyl-L-methionine-binding positions include 96-97 and aspartate 168; that span reads RD.

This sequence belongs to the methyltransferase superfamily. RsmJ family.

The protein localises to the cytoplasm. The enzyme catalyses guanosine(1516) in 16S rRNA + S-adenosyl-L-methionine = N(2)-methylguanosine(1516) in 16S rRNA + S-adenosyl-L-homocysteine + H(+). Functionally, specifically methylates the guanosine in position 1516 of 16S rRNA. This is Ribosomal RNA small subunit methyltransferase J from Neisseria gonorrhoeae (strain NCCP11945).